The primary structure comprises 421 residues: Bone morphogenetic protein 10 (421 aa).

An N-terminal signal peptide occupies residues 1–21 (MGSLVLPLSAVFCLVAHSASG). A propeptide spanning residues 22–313 (SPIMGLEQSP…IDDSSARIRR (292 aa)) is cleaved from the precursor. Asparagine 67 and asparagine 131 each carry an N-linked (GlcNAc...) asparagine glycan. 3 cysteine pairs are disulfide-bonded: cysteine 320/cysteine 386, cysteine 349/cysteine 418, and cysteine 353/cysteine 420.

This sequence belongs to the TGF-beta family. Homodimer; disulfide-linked. Interacts with FBN1 (via N-terminal domain) and FBN2. Interacts with ENG. As to expression, in the embryo, expressed exclusively in the ventricular trabecular myocardium of the developing heart from 9.0 dpc-13.5 dpc. By 16.5 dpc-18.5 dpc, only detectable in atria. Highly expressed in the adult heart where it is found in the right atrium but not in the left atrium. Lower levels in adult liver and lung.

It localises to the secreted. In terms of biological role, required for maintaining the proliferative activity of embryonic cardiomyocytes by preventing premature activation of the negative cell cycle regulator CDKN1C/p57KIP and maintaining the required expression levels of cardiogenic factors such as MEF2C and NKX2-5. Acts as a ligand for ACVRL1/ALK1, BMPR1A/ALK3 and BMPR1B/ALK6, leading to activation of SMAD1, SMAD5 and SMAD8 transcription factors. Inhibits endothelial cell migration and growth. May reduce cell migration and cell matrix adhesion in breast cancer cell lines. The sequence is that of Bone morphogenetic protein 10 (Bmp10) from Mus musculus (Mouse).